A 240-amino-acid chain; its full sequence is uncharacterized protein (240 aa).

Residues 73 to 93 (LLGCLYFFIYFVAPTLGPVLF) traverse the membrane as a helical segment.

It belongs to the universal ribosomal protein uS3 family.

It localises to the mitochondrion membrane. This is an uncharacterized protein from Arabidopsis thaliana (Mouse-ear cress).